The following is a 557-amino-acid chain: Formate--tetrahydrofolate ligase 2 (557 aa).

Residue 66–73 (TPAGEGKT) participates in ATP binding.

Belongs to the formate--tetrahydrofolate ligase family.

The catalysed reaction is (6S)-5,6,7,8-tetrahydrofolate + formate + ATP = (6R)-10-formyltetrahydrofolate + ADP + phosphate. The protein operates within one-carbon metabolism; tetrahydrofolate interconversion. This chain is Formate--tetrahydrofolate ligase 2, found in Streptococcus pyogenes serotype M28 (strain MGAS6180).